We begin with the raw amino-acid sequence, 158 residues long: MGRFISVSFGLLVVFLSLSGTGADFDCPSGWSAYDWYCYKPFNEPQTWDDAERFCTEQAKGGHLVSIESSGEADFVGQLVSENIQRPEIYVWIGLRDRRKEQQCSSEWSDGTSIIYVNWNKGESQMCQGLSKWTNFLKWDNTDCQAKNPFVCKFPPQC.

The signal sequence occupies residues 1–23; that stretch reads MGRFISVSFGLLVVFLSLSGTGA. Disulfide bonds link C27-C38, C55-C152, and C127-C144. The 120-residue stretch at 34-153 folds into the C-type lectin domain; the sequence is YDWYCYKPFN…CQAKNPFVCK (120 aa).

It belongs to the snaclec family. In terms of assembly, heteromultimer; disulfide-linked. In terms of tissue distribution, expressed by the venom gland.

It is found in the secreted. In terms of biological role, interferes with one step of hemostasis (modulation of platelet aggregation, or coagulation cascade, for example). The sequence is that of Snaclec stejaggregin-A subunit alpha from Trimeresurus stejnegeri (Chinese green tree viper).